We begin with the raw amino-acid sequence, 236 residues long: Carboxymethylenebutenolidase (236 aa).

Active-site residues include Cys-123, Asp-171, and His-202.

Belongs to the dienelactone hydrolase family. In terms of assembly, monomer.

The catalysed reaction is 2-(5-oxo-2,5-dihydrofuran-2-ylidene)acetate + H2O = 4-oxohex-2-enedioate + H(+). It functions in the pathway aromatic compound metabolism; 3-chlorocatechol degradation. Its function is as follows. Ring cleavage of cyclic ester dienelactone to produce maleylacetate. This is Carboxymethylenebutenolidase (clcD) from Pseudomonas knackmussii (strain DSM 6978 / CCUG 54928 / LMG 23759 / B13).